Consider the following 134-residue polypeptide: MRHRNSGRQLSRNSAHRKATLQNMTASLFRHEVIKTTLPKAKELRRVAEPLITLAKVDNVHKRRVAFARLRDKEMVGKLFQELGPRYQTRPGGYMRILKCGNRPGDNAPMAFVELVDRPELTEEAPAVESAKEE.

This sequence belongs to the bacterial ribosomal protein bL17 family. Part of the 50S ribosomal subunit. Contacts protein L32.

This is Large ribosomal subunit protein bL17 from Thioalkalivibrio sulfidiphilus (strain HL-EbGR7).